Here is a 453-residue protein sequence, read N- to C-terminus: Ribosomal protein uS12 methylthiotransferase RimO (453 aa).

An MTTase N-terminal domain is found at 5-120 (PKVGFVSLGC…VMQAVHSHLP (116 aa)). [4Fe-4S] cluster-binding residues include cysteine 14, cysteine 50, cysteine 79, cysteine 151, cysteine 155, and cysteine 158. Residues 137 to 383 (LTPRHYAYLK…EVAEEVSAHR (247 aa)) form the Radical SAM core domain. Positions 385–453 (QRKVGKTLKV…ADGHDLWGEV (69 aa)) constitute a TRAM domain.

The protein belongs to the methylthiotransferase family. RimO subfamily. [4Fe-4S] cluster serves as cofactor.

The protein localises to the cytoplasm. The enzyme catalyses L-aspartate(89)-[ribosomal protein uS12]-hydrogen + (sulfur carrier)-SH + AH2 + 2 S-adenosyl-L-methionine = 3-methylsulfanyl-L-aspartate(89)-[ribosomal protein uS12]-hydrogen + (sulfur carrier)-H + 5'-deoxyadenosine + L-methionine + A + S-adenosyl-L-homocysteine + 2 H(+). Functionally, catalyzes the methylthiolation of an aspartic acid residue of ribosomal protein uS12. The protein is Ribosomal protein uS12 methylthiotransferase RimO of Burkholderia cenocepacia (strain ATCC BAA-245 / DSM 16553 / LMG 16656 / NCTC 13227 / J2315 / CF5610) (Burkholderia cepacia (strain J2315)).